A 345-amino-acid chain; its full sequence is MSADFWSSSQRNRWQLTRHSLLESRRKLLLLEKKMIQNGFIKDYPNVEYDANTRIYLHNLLIKLGRRLNVRQIALATAEIYMSRFLIKVSLKEINVYLLVTTCLYAACKIEECPQHIRLITSEARNLWPEYIPQDVTKLAEFEFYLIEEMDSFLVLHHPYRSLLQIRDYLNENFALYGFSLSDDELQNSWSLINDSYITDLHLLLPPHIIAIATIYITIVLKKNISSLRLGANSMSNDTVGMDPHTKPNSNSIHAEDLMALATGGSAINDIGNPSSGTNGFHDIELDENTIKINKFMTFLDHSHVNLNEVVEAIQDIITLYAIWNRYNEMSVKKVLQDMLLNRSV.

The Cyclin N-terminal domain maps to 23–147 (ESRRKLLLLE…KLAEFEFYLI (125 aa)).

Belongs to the cyclin family. Cyclin C subfamily. Component of the SRB8-11 complex, a regulatory module of the Mediator complex.

The protein localises to the nucleus. In terms of biological role, component of the SRB8-11 complex. The SRB8-11 complex is a regulatory module of the Mediator complex which is itself involved in regulation of basal and activated RNA polymerase II-dependent transcription. The SRB8-11 complex may be involved in the transcriptional repression of a subset of genes regulated by Mediator. It may inhibit the association of the Mediator complex with RNA polymerase II to form the holoenzyme complex. The SRB8-11 complex phosphorylates the C-terminal domain (CTD) of the largest subunit of RNA polymerase II. In Debaryomyces hansenii (strain ATCC 36239 / CBS 767 / BCRC 21394 / JCM 1990 / NBRC 0083 / IGC 2968) (Yeast), this protein is RNA polymerase II holoenzyme cyclin-like subunit (SSN8).